The primary structure comprises 468 residues: Alcohol dehydrogenase (quinone), cytochrome c subunit (468 aa).

The first 23 residues, 1 to 23 (MINRLKVTFSAAAFSLLAGTALA), serve as a signal peptide directing secretion. 3 consecutive Cytochrome c domains span residues 31-134 (ALVQ…MHGV), 178-293 (PEIA…KSLP), and 317-407 (TASV…RTSW). Cys45, Cys48, His49, Cys193, Cys196, His197, Cys330, Cys333, and His334 together coordinate heme c.

In terms of assembly, the alcohol dehydrogenase multicomponent enzyme system is composed of a dehydrogenase subunit I (AdhA) and a cytochrome c subunit II (AdhB). Heme c is required as a cofactor.

It localises to the cell membrane. It carries out the reaction ethanol + a ubiquinone = a ubiquinol + acetaldehyde. In terms of biological role, cytochrome c component of the alcohol dehydrogenase multicomponent enzyme system which is involved in the production of acetic acid and in the ethanol oxidase respiratory chain. Quinohemoprotein alcohol dehydrogenase (ADH) catalyzes the oxidation of ethanol to acetaldehyde by transferring electrons to the ubiquinone embedded in the membrane phospholipids. The electrons transfer from ethanol to membranous ubiquinone occurs from pyrroloquinoline quinone (PQQ) to one heme c in subunit I (AdhA), and finally to two heme c in subunit II (AdhB). Besides ubiquinone reduction, ADH also has a ubiquinol (QH2) oxidation reaction which mediates electron transfer from ubiquinol to the non-energy generating bypass oxidase system. The electrons transfer occurs from ubiquinol (QH2) to the additional heme c within subunit II (AdhB). The polypeptide is Alcohol dehydrogenase (quinone), cytochrome c subunit (Gluconacetobacter polyoxogenes (Acetobacter polyoxogenes)).